Reading from the N-terminus, the 299-residue chain is tRNA pseudouridine synthase B (299 aa).

D45 serves as the catalytic Nucleophile.

This sequence belongs to the pseudouridine synthase TruB family. Type 1 subfamily.

It catalyses the reaction uridine(55) in tRNA = pseudouridine(55) in tRNA. Its function is as follows. Responsible for synthesis of pseudouridine from uracil-55 in the psi GC loop of transfer RNAs. This is tRNA pseudouridine synthase B from Streptomyces griseus subsp. griseus (strain JCM 4626 / CBS 651.72 / NBRC 13350 / KCC S-0626 / ISP 5235).